Consider the following 298-residue polypeptide: Protoheme IX farnesyltransferase (298 aa).

8 consecutive transmembrane segments (helical) span residues 16 to 36 (VVAL…PGMP), 45 to 65 (ALGF…NQLL), 97 to 117 (VLIV…TAVL), 141 to 161 (IVIG…AVTG), 172 to 192 (SLLV…LAIF), 223 to 243 (VLLA…VFYL), 244 to 264 (GGAV…LDPP), and 277 to 297 (VVYL…LPWV).

It belongs to the UbiA prenyltransferase family. Protoheme IX farnesyltransferase subfamily.

It localises to the cell inner membrane. It carries out the reaction heme b + (2E,6E)-farnesyl diphosphate + H2O = Fe(II)-heme o + diphosphate. The protein operates within porphyrin-containing compound metabolism; heme O biosynthesis; heme O from protoheme: step 1/1. In terms of biological role, converts heme B (protoheme IX) to heme O by substitution of the vinyl group on carbon 2 of heme B porphyrin ring with a hydroxyethyl farnesyl side group. In Xanthomonas campestris pv. campestris (strain 8004), this protein is Protoheme IX farnesyltransferase.